Reading from the N-terminus, the 506-residue chain is Dolabradiene monooxygenase (506 aa).

The helical transmembrane segment at 5–25 (VLLAVAMVALIAVLSKLKSLL) threads the bilayer. Residue C443 coordinates heme.

The protein belongs to the cytochrome P450 family. The cofactor is heme.

It localises to the membrane. The enzyme catalyses dolabradiene + reduced [NADPH--hemoprotein reductase] + O2 = 15,16-epoxydolabrene + oxidized [NADPH--hemoprotein reductase] + H2O + H(+). It carries out the reaction 15,16-epoxydolabrene + reduced [NADPH--hemoprotein reductase] + O2 = 3beta-hydroxy-15,16-epoxydolabrene + oxidized [NADPH--hemoprotein reductase] + H2O + H(+). Its function is as follows. Involved in the production of antifungal dolabralexin phytoalexins in response to biotic and abiotic stresses. Catalyzes the epoxidation of dolabradiene at C-16, followed by hydroxylation at C-3, to yield the epoxides 15,16-epoxydolabrene (epoxydolabrene) and 3b-hydroxy-15,16-epoxydolabrene (epoxydolabranol). This is Dolabradiene monooxygenase from Zea mays (Maize).